The primary structure comprises 497 residues: Probable cytosol aminopeptidase (497 aa).

Positions 263 and 268 each coordinate Mn(2+). Residue K275 is part of the active site. Positions 286, 345, and 347 each coordinate Mn(2+). R349 is an active-site residue.

This sequence belongs to the peptidase M17 family. Requires Mn(2+) as cofactor.

Its subcellular location is the cytoplasm. The catalysed reaction is Release of an N-terminal amino acid, Xaa-|-Yaa-, in which Xaa is preferably Leu, but may be other amino acids including Pro although not Arg or Lys, and Yaa may be Pro. Amino acid amides and methyl esters are also readily hydrolyzed, but rates on arylamides are exceedingly low.. It catalyses the reaction Release of an N-terminal amino acid, preferentially leucine, but not glutamic or aspartic acids.. Its function is as follows. Presumably involved in the processing and regular turnover of intracellular proteins. Catalyzes the removal of unsubstituted N-terminal amino acids from various peptides. This Rhizobium meliloti (strain 1021) (Ensifer meliloti) protein is Probable cytosol aminopeptidase.